A 524-amino-acid chain; its full sequence is Keratin, type II cytoskeletal 71 (524 aa).

Positions 1-130 (MNRQFTCKSG…DPEIQKVRAQ (130 aa)) are head. The tract at residues 131–166 (EREQIKALNNKFASFIDKVRFLEQQNQVLETKWELL) is coil 1A. The IF rod domain maps to 131–444 (EREQIKALNN…KLLESEECRM (314 aa)). Positions 167 to 185 (QQLDLNNCKNNLEPILEGY) are linker 1. Residues 186–277 (ISNLRKQLET…CLYEAEIAQI (92 aa)) are coil 1B. The segment at 278 to 301 (QSHISDMSVILSMDNNRDLNLDSI) is linker 12. The segment at 302 to 440 (IDEVRAQYEE…ATYRKLLESE (139 aa)) is coil 2. The segment at 441–524 (ECRMSGEFPS…QSASSKKASR (84 aa)) is tail. Residues 491-524 (VRGGEGRSRGSTSDYKDTLGKGSSQSASSKKASR) form a disordered region. Residues 494–509 (GEGRSRGSTSDYKDTL) show a composition bias toward basic and acidic residues. The segment covering 510 to 524 (GKGSSQSASSKKASR) has biased composition (low complexity).

This sequence belongs to the intermediate filament family. As to quaternary structure, heterodimer of a type I and a type II keratin. Associates with KRT16 and/or KRT17.

It is found in the cytoplasm. Its subcellular location is the cytoskeleton. Its function is as follows. Plays a central role in hair formation. Essential component of keratin intermediate filaments in the inner root sheath (IRS) of the hair follicle. This chain is Keratin, type II cytoskeletal 71 (KRT71), found in Felis catus (Cat).